Reading from the N-terminus, the 546-residue chain is 2-isopropylmalate synthase (546 aa).

A Pyruvate carboxyltransferase domain is found at 8-271 (ILIFDTTLRD…NSFFKRNPDS (264 aa)). Positions 17, 208, 210, and 244 each coordinate Mn(2+). The tract at residues 408 to 546 (QLCLVQVSCG…NKTFLSNPAN (139 aa)) is regulatory domain.

It belongs to the alpha-IPM synthase/homocitrate synthase family. LeuA type 1 subfamily. Homodimer. It depends on Mn(2+) as a cofactor.

The protein resides in the cytoplasm. It catalyses the reaction 3-methyl-2-oxobutanoate + acetyl-CoA + H2O = (2S)-2-isopropylmalate + CoA + H(+). The protein operates within amino-acid biosynthesis; L-leucine biosynthesis; L-leucine from 3-methyl-2-oxobutanoate: step 1/4. Catalyzes the condensation of the acetyl group of acetyl-CoA with 3-methyl-2-oxobutanoate (2-ketoisovalerate) to form 3-carboxy-3-hydroxy-4-methylpentanoate (2-isopropylmalate). The sequence is that of 2-isopropylmalate synthase from Prochlorococcus marinus (strain MIT 9312).